The primary structure comprises 351 residues: tRNA pseudouridine synthase D (351 aa).

The Nucleophile role is filled by Asp-96. Positions 174–304 (GAPNYFGPQR…MKPERRPLVA (131 aa)) constitute a TRUD domain. Residues 244–268 (VLPGEPEPSGAGPTGPLWGDGGTLA) form a disordered region.

Belongs to the pseudouridine synthase TruD family.

The enzyme catalyses uridine(13) in tRNA = pseudouridine(13) in tRNA. Functionally, responsible for synthesis of pseudouridine from uracil-13 in transfer RNAs. This is tRNA pseudouridine synthase D from Marinobacter nauticus (strain ATCC 700491 / DSM 11845 / VT8) (Marinobacter aquaeolei).